The following is a 90-amino-acid chain: Phosphocarrier protein NPr (90 aa).

Residues 2-90 (TVKQTVEITN…ALFNSGFDED (89 aa)) form the HPr domain. The active-site Pros-phosphohistidine intermediate is the histidine 16.

This sequence belongs to the HPr family.

Its subcellular location is the cytoplasm. Its function is as follows. Component of the phosphoenolpyruvate-dependent nitrogen-metabolic phosphotransferase system (nitrogen-metabolic PTS), that seems to be involved in regulating nitrogen metabolism. The phosphoryl group from phosphoenolpyruvate (PEP) is transferred to the phosphoryl carrier protein NPr by enzyme I-Ntr. Phospho-NPr then transfers it to EIIA-Ntr. Could function in the transcriptional regulation of sigma-54 dependent operons in conjunction with the NPr (PtsO) and EIIA-Ntr (PtsN) proteins. The chain is Phosphocarrier protein NPr (ptsO) from Escherichia coli O157:H7.